The primary structure comprises 359 residues: Gene 58 protein (359 aa).

Transmembrane regions (helical) follow at residues 12–32 (TMAAFGTGMLGAASFVWCFLF), 45–65 (VDELFFWGSLCVQVMMLFFCF), 75–95 (YLDLICAVNIVALFGCLICLQ), 103–123 (YLPILFSLNLIWLSVWLPVTF), 132–152 (YANAYFQLGFFTATTVHYLLL), 154–174 (FGSVTTSFLFIPFACFLIAGL), 220–240 (LCVVAVMTVGFAVFMTAAGVY), 246–266 (VLKTYLLMFQFGTFCVGGMGY), 271–289 (ATFVYCMTACILMPLVFVL), 296–318 (SVLFLAIFFLFINGVTCETTIML), and 330–350 (IVLSVCLLVNICITLSLNVLY).

This sequence belongs to the herpesviridae BMRF2 family.

The protein resides in the host membrane. The protein is Gene 58 protein (58) of Equine herpesvirus 2 (strain 86/87) (EHV-2).